Consider the following 57-residue polypeptide: uncharacterized protein (57 aa).

This is an uncharacterized protein from Dictyostelium discoideum (Social amoeba).